The primary structure comprises 559 residues: Transmembrane E3 ubiquitin-protein ligase FLY2 (559 aa).

The first 29 residues, 1-29 (MNNLGNFGVWGFGFFSLSIWFAVLQQANG), serve as a signal peptide directing secretion. The Lumenal segment spans residues 30–259 (LRPIRETARS…TSINVEVYYN (230 aa)). A helical transmembrane segment spans residues 260–280 (KAVNYTLMVTFVSFLQVLLLI). The Cytoplasmic segment spans residues 281 to 294 (RQMEHSNTQSGAAK). Residues 295–315 (VSIVMIGQQAIMDSYLCLLHL) traverse the membrane as a helical segment. Residues 316 to 318 (TAG) lie on the Lumenal side of the membrane. A helical transmembrane segment spans residues 319–339 (ILVESLFNAFATAAFFKFVVF). The Cytoplasmic portion of the chain corresponds to 340-370 (SIFEMRYLLSIWKATRPSTSGEGWETMRREL). A helical membrane pass occupies residues 371–391 (SFLYSRFYGILLGGILLMYEF). At 392–394 (HNY) the chain is on the lumenal side. A helical transmembrane segment spans residues 395–415 (MRPILLLMYSFWIPQIVANVV). Residues 416–423 (RDSRKPLH) lie on the Cytoplasmic side of the membrane. Residues 424–444 (PYYILGMTVTRLAIPLYVFGC) form a helical membrane-spanning segment. Residues 445 to 458 (PKNFMRVEPSKAWC) lie on the Lumenal side of the membrane. A helical membrane pass occupies residues 459-479 (VSLCAFMGFQAGVLLLQHYFG). Residues 480-559 (SRCFVPRKLL…PTCRRPLPPA (80 aa)) are Cytoplasmic-facing. Residues 509 to 553 (CVICMTTIDLRHRINDCMVTPCEHIFHSGCLQRWMDIKMECPTCR) form an RING-type; atypical zinc finger.

Highly expressed in stems. Expressed in root xylem and seed coat.

It is found in the endomembrane system. The enzyme catalyses S-ubiquitinyl-[E2 ubiquitin-conjugating enzyme]-L-cysteine + [acceptor protein]-L-lysine = [E2 ubiquitin-conjugating enzyme]-L-cysteine + N(6)-ubiquitinyl-[acceptor protein]-L-lysine.. It participates in protein modification; protein ubiquitination. In terms of biological role, E3 ubiquitin-protein ligase that may be involved in xylem development. The sequence is that of Transmembrane E3 ubiquitin-protein ligase FLY2 from Arabidopsis thaliana (Mouse-ear cress).